Here is a 424-residue protein sequence, read N- to C-terminus: Serine/threonine-protein kinase H1 (424 aa).

Gly-2 carries N-myristoyl glycine lipidation. Cys-3 carries S-palmitoyl cysteine lipidation. Positions Ser-56–Arg-80 are disordered. Positions Tyr-98 to Val-355 constitute a Protein kinase domain. ATP contacts are provided by residues Ile-104–Val-112 and Lys-127. The active-site Proton acceptor is the Asp-218. Positions Arg-378–Arg-407 are disordered. Phosphoserine; by autocatalysis occurs at positions 380 and 381. A compositionally biased stretch (low complexity) spans Ser-385 to Thr-398.

It belongs to the protein kinase superfamily. CAMK Ser/Thr protein kinase family. In terms of assembly, homodimer. In terms of processing, autophosphorylated on serine residues. Myristoylated. Required for membrane association. Prerequisite for palmitoylation to occur. Post-translationally, palmitoylated. Expressed in all tissues and cell lines tested with the highest level of abundance in testis.

It localises to the golgi apparatus. The protein localises to the cytoplasm. Its subcellular location is the cytoskeleton. It is found in the microtubule organizing center. The protein resides in the centrosome. It localises to the nucleus speckle. The protein localises to the endoplasmic reticulum membrane. Its subcellular location is the cell membrane. The enzyme catalyses L-seryl-[protein] + ATP = O-phospho-L-seryl-[protein] + ADP + H(+). It catalyses the reaction L-threonyl-[protein] + ATP = O-phospho-L-threonyl-[protein] + ADP + H(+). Activity depends on Ca(2+) concentration. In terms of biological role, serine/threonine protein kinase that may be involved in the regulation of pre-mRNA processing. It may phosphorylate components of nuclear splice factor compartments (SFC), such as non-snRNP splicing factors containing a serine/arginine-rich domain (SR proteins). Reversible phosphorylation of SR proteins may cause their release into the nucleoplasm and change their local concentration, thereby influencing alternative splicing. The protein is Serine/threonine-protein kinase H1 (PSKH1) of Homo sapiens (Human).